We begin with the raw amino-acid sequence, 335 residues long: Vitamin B12 import system permease protein BtuC (335 aa).

The next 9 membrane-spanning stretches (helical) occupy residues 25–45 (LVVILLLSLLISLCAGDIWLW), 67–87 (LAVLMVGASLAVSGAVMQALF), 95–114 (GLLGVANGAGVALVMAVLLG), 118–140 (LPIWFLSACAIAGALLMTMLLLG), 153–173 (LLVGVALGIVCSAIMTWAVYF), 200–220 (LVLALLPIVLWLCCQGHVLNF), 243–263 (VLAIGLLVGVSVALAGVISFI), 286–306 (CALAGGGILLLADIVARIALF), and 308–328 (AELPIGVVTATLGAPLFIWLL).

It belongs to the binding-protein-dependent transport system permease family. FecCD subfamily. As to quaternary structure, the complex is composed of two ATP-binding proteins (BtuD), two transmembrane proteins (BtuC) and a solute-binding protein (BtuF).

The protein localises to the cell inner membrane. In terms of biological role, part of the ABC transporter complex BtuCDF involved in vitamin B12 import. Involved in the translocation of the substrate across the membrane. The polypeptide is Vitamin B12 import system permease protein BtuC (Yersinia enterocolitica serotype O:8 / biotype 1B (strain NCTC 13174 / 8081)).